The primary structure comprises 304 residues: Ribonuclease Z (304 aa).

Zn(2+) is bound by residues His-63, His-65, Asp-67, His-68, His-141, Asp-208, and His-266. Residue Asp-67 is the Proton acceptor of the active site.

Belongs to the RNase Z family. In terms of assembly, homodimer. It depends on Zn(2+) as a cofactor.

It catalyses the reaction Endonucleolytic cleavage of RNA, removing extra 3' nucleotides from tRNA precursor, generating 3' termini of tRNAs. A 3'-hydroxy group is left at the tRNA terminus and a 5'-phosphoryl group is left at the trailer molecule.. Functionally, zinc phosphodiesterase, which displays some tRNA 3'-processing endonuclease activity. Probably involved in tRNA maturation, by removing a 3'-trailer from precursor tRNA. The chain is Ribonuclease Z from Chlamydia trachomatis serovar D (strain ATCC VR-885 / DSM 19411 / UW-3/Cx).